A 634-amino-acid polypeptide reads, in one-letter code: tRNA uridine 5-carboxymethylaminomethyl modification enzyme MnmG (634 aa).

FAD is bound at residue 14 to 19 (GGGHAG). Residue 279 to 293 (GPRYCPSIEDKVVRF) participates in NAD(+) binding.

This sequence belongs to the MnmG family. In terms of assembly, homodimer. Heterotetramer of two MnmE and two MnmG subunits. FAD serves as cofactor.

It is found in the cytoplasm. NAD-binding protein involved in the addition of a carboxymethylaminomethyl (cmnm) group at the wobble position (U34) of certain tRNAs, forming tRNA-cmnm(5)s(2)U34. This Xanthomonas oryzae pv. oryzae (strain KACC10331 / KXO85) protein is tRNA uridine 5-carboxymethylaminomethyl modification enzyme MnmG.